The following is a 467-amino-acid chain: Glutamate--tRNA ligase (467 aa).

The short motif at 12-22 is the 'HIGH' region element; sequence PSPTGYLHIGG. Basic and acidic residues predominate over residues 114 to 128; sequence EQEAKKEKPRYDGRW. The tract at residues 114–140 is disordered; the sequence is EQEAKKEKPRYDGRWRPAPGKTLPTPP. Residues 244-248 carry the 'KMSKS' region motif; it reads KLSKR. Position 247 (Lys-247) interacts with ATP.

Belongs to the class-I aminoacyl-tRNA synthetase family. Glutamate--tRNA ligase type 1 subfamily. As to quaternary structure, monomer.

It is found in the cytoplasm. The enzyme catalyses tRNA(Glu) + L-glutamate + ATP = L-glutamyl-tRNA(Glu) + AMP + diphosphate. Functionally, catalyzes the attachment of glutamate to tRNA(Glu) in a two-step reaction: glutamate is first activated by ATP to form Glu-AMP and then transferred to the acceptor end of tRNA(Glu). This Azoarcus sp. (strain BH72) protein is Glutamate--tRNA ligase.